The chain runs to 605 residues: Glutamine--fructose-6-phosphate aminotransferase [isomerizing] (605 aa).

Residue cysteine 2 is the Nucleophile; for GATase activity of the active site. The region spanning 2–216 (CGIVGIVGHQ…DGDWAVIGKT (215 aa)) is the Glutamine amidotransferase type-2 domain. SIS domains follow at residues 280-420 (DSDA…ARGT) and 454-595 (LSRE…VDQP). Lysine 600 serves as the catalytic For Fru-6P isomerization activity.

Its subcellular location is the cytoplasm. The enzyme catalyses D-fructose 6-phosphate + L-glutamine = D-glucosamine 6-phosphate + L-glutamate. Its function is as follows. Involved in the production of the root hair deformation (HAD) factor specifically on medicago. The chain is Glutamine--fructose-6-phosphate aminotransferase [isomerizing] (nodM) from Rhizobium meliloti (Ensifer meliloti).